The chain runs to 296 residues: Protein-export membrane protein SecF (296 aa).

6 consecutive transmembrane segments (helical) span residues 23–43 (MIIYPLIVFGIAIIIIIANYV), 144–164 (AIVYAFIGMAIVVFLFFRVPV), 169–189 (VVFSAFSDMIIAIALMNIFGI), 194–214 (ATIAALLMLIGYSVDSNILLT), 236–256 (GFTMSTTTLGALASLWIFSTA), and 265–285 (VLIFGLLADFMNTWILNAGVL).

Belongs to the SecD/SecF family. SecF subfamily. In terms of assembly, part of the protein translocation apparatus. Forms a complex with SecD.

It localises to the cell membrane. Functionally, involved in protein export. In Pyrococcus furiosus (strain ATCC 43587 / DSM 3638 / JCM 8422 / Vc1), this protein is Protein-export membrane protein SecF.